Reading from the N-terminus, the 153-residue chain is Transthyretin (153 aa).

An N-terminal signal peptide occupies residues 1–24 (MAYYNTLALLTIFIFSGAFHRAQG). C33 is subject to Sulfocysteine. Residues K38, E77, and S140 each coordinate L-thyroxine.

Belongs to the transthyretin family. Homotetramer. Dimer of dimers. In the homotetramer, subunits assemble around a central channel that can accommodate two ligand molecules. Interacts with RBP4. Sulfonation of the reactive cysteine Cys-33 enhances the stability of the native conformation of TTR, avoiding misassembly of the protein leading to amyloid formation. As to expression, detected in plasma (at protein level). Expressed during metamorphosis in tadpole liver but not in tadpole brain, nor adult liver.

The protein resides in the secreted. Functionally, thyroid hormone-binding protein, with a much higher binding affinity for triiodothyronine (T3) than for thyroxine (T4). Probably transports triiodothyronine from the bloodstream to the brain. The polypeptide is Transthyretin (Aquarana catesbeiana (American bullfrog)).